A 119-amino-acid polypeptide reads, in one-letter code: Large ribosomal subunit protein bL20 (119 aa).

The protein belongs to the bacterial ribosomal protein bL20 family.

Its function is as follows. Binds directly to 23S ribosomal RNA and is necessary for the in vitro assembly process of the 50S ribosomal subunit. It is not involved in the protein synthesizing functions of that subunit. This chain is Large ribosomal subunit protein bL20, found in Acidovorax ebreus (strain TPSY) (Diaphorobacter sp. (strain TPSY)).